The following is a 149-amino-acid chain: uncharacterized protein (149 aa).

This is an uncharacterized protein from Methanocaldococcus jannaschii (strain ATCC 43067 / DSM 2661 / JAL-1 / JCM 10045 / NBRC 100440) (Methanococcus jannaschii).